The sequence spans 238 residues: Urease subunit alpha (238 aa).

The interval 1–102 (MKLTPKELDK…LVTVHTPIES (102 aa)) is urease gamma. Positions 103-238 (KGKLVPGELF…DDNYVKTIKE (136 aa)) are urease beta.

It in the N-terminal section; belongs to the urease gamma subunit family. In the C-terminal section; belongs to the urease beta subunit family. As to quaternary structure, heterohexamer of 3 UreA (alpha) and 3 UreB (beta) subunits.

It is found in the cytoplasm. It carries out the reaction urea + 2 H2O + H(+) = hydrogencarbonate + 2 NH4(+). It functions in the pathway nitrogen metabolism; urea degradation; CO(2) and NH(3) from urea (urease route): step 1/1. The sequence is that of Urease subunit alpha from Helicobacter acinonychis (strain Sheeba).